Here is a 506-residue protein sequence, read N- to C-terminus: Galactose/methyl galactoside import ATP-binding protein MglA (506 aa).

ABC transporter domains are found at residues 14–249 and 264–506; these read LEMS…VGRS and VILE…SLHL. 46–53 provides a ligand contact to ATP; the sequence is GENGAGKS.

The protein belongs to the ABC transporter superfamily. Galactose/methyl galactoside importer (TC 3.A.1.2.3) family. The complex is composed of one ATP-binding protein (MglA), two transmembrane proteins (MglC) and a solute-binding protein (MglB).

The protein localises to the cell inner membrane. It catalyses the reaction D-galactose(out) + ATP + H2O = D-galactose(in) + ADP + phosphate + H(+). It carries out the reaction methyl beta-D-galactoside(out) + ATP + H2O = methyl beta-D-galactoside(in) + ADP + phosphate + H(+). Part of the ABC transporter complex MglABC involved in galactose/methyl galactoside import. Responsible for energy coupling to the transport system. This chain is Galactose/methyl galactoside import ATP-binding protein MglA, found in Escherichia coli O157:H7.